The sequence spans 216 residues: Ras-related protein RabN1 (216 aa).

Position 15–22 (15–22 (GDYNSGKT)) interacts with GTP. The Effector region signature appears at 37-44 (TCPSTFDL). GTP-binding positions include 62–66 (DTAGQ) and 128–131 (TKSD). C216 carries the S-geranylgeranyl cysteine lipid modification.

It belongs to the small GTPase superfamily. Rab family.

The protein localises to the cell membrane. The protein is Ras-related protein RabN1 (rabN1) of Dictyostelium discoideum (Social amoeba).